The following is a 124-amino-acid chain: Putative outer membrane protein TC_0858 (124 aa).

Residues methionine 1–alanine 31 form the signal peptide.

Its subcellular location is the cell outer membrane. This is Putative outer membrane protein TC_0858 from Chlamydia muridarum (strain MoPn / Nigg).